We begin with the raw amino-acid sequence, 256 residues long: ATP synthase peripheral stalk subunit b, mitochondrial (256 aa).

Residues 1 to 42 constitute a mitochondrion transit peptide; it reads MLSRVVLSAAATAAPCLKNAAVLGPGVLQATRVFHTGQPRLA. Position 131 is an N6-succinyllysine (K131). N6-acetyllysine occurs at positions 139, 154, 162, 221, 233, and 244.

Belongs to the eukaryotic ATPase B chain family. In terms of assembly, component of the ATP synthase complex composed at least of ATP5F1A/subunit alpha, ATP5F1B/subunit beta, ATP5MC1/subunit c (homooctomer), MT-ATP6/subunit a, MT-ATP8/subunit 8, ATP5ME/subunit e, ATP5MF/subunit f, ATP5MG/subunit g, ATP5MK/subunit k, ATP5MJ/subunit j, ATP5F1C/subunit gamma, ATP5F1D/subunit delta, ATP5F1E/subunit epsilon, ATP5PF/subunit F6, ATP5PB/subunit b, ATP5PD/subunit d, ATP5PO/subunit OSCP. ATP synthase complex consists of a soluble F(1) head domain (subunits alpha(3) and beta(3)) - the catalytic core - and a membrane F(0) domain - the membrane proton channel (subunits c, a, 8, e, f, g, k and j). These two domains are linked by a central stalk (subunits gamma, delta, and epsilon) rotating inside the F1 region and a stationary peripheral stalk (subunits F6, b, d, and OSCP).

The protein resides in the mitochondrion. The protein localises to the mitochondrion inner membrane. Subunit b, of the mitochondrial membrane ATP synthase complex (F(1)F(0) ATP synthase or Complex V) that produces ATP from ADP in the presence of a proton gradient across the membrane which is generated by electron transport complexes of the respiratory chain. ATP synthase complex consist of a soluble F(1) head domain - the catalytic core - and a membrane F(1) domain - the membrane proton channel. These two domains are linked by a central stalk rotating inside the F(1) region and a stationary peripheral stalk. During catalysis, ATP synthesis in the catalytic domain of F(1) is coupled via a rotary mechanism of the central stalk subunits to proton translocation. In vivo, can only synthesize ATP although its ATP hydrolase activity can be activated artificially in vitro. Part of the complex F(0) domain. Part of the complex F(0) domain and the peripheric stalk, which acts as a stator to hold the catalytic alpha(3)beta(3) subcomplex and subunit a/ATP6 static relative to the rotary elements. This chain is ATP synthase peripheral stalk subunit b, mitochondrial, found in Rattus norvegicus (Rat).